Reading from the N-terminus, the 237-residue chain is Uracil-DNA glycosylase (237 aa).

Asp77 serves as the catalytic Proton acceptor.

It belongs to the uracil-DNA glycosylase (UDG) superfamily. UNG family.

The protein localises to the cytoplasm. The enzyme catalyses Hydrolyzes single-stranded DNA or mismatched double-stranded DNA and polynucleotides, releasing free uracil.. Its function is as follows. Excises uracil residues from the DNA which can arise as a result of misincorporation of dUMP residues by DNA polymerase or due to deamination of cytosine. The chain is Uracil-DNA glycosylase from Acinetobacter baumannii (strain SDF).